A 408-amino-acid polypeptide reads, in one-letter code: Tyrosine--tRNA ligase (408 aa).

Residues 50 to 59 (PTGKDLTLGH) carry the 'HIGH' region motif. The 'KMSKS' region signature appears at 234 to 238 (KMSKS). Lys-237 contacts ATP. The S4 RNA-binding domain occupies 346–407 (MQAARVLFTA…GKRKYGRVVL (62 aa)).

Belongs to the class-I aminoacyl-tRNA synthetase family. TyrS type 2 subfamily. Homodimer.

The protein resides in the cytoplasm. It carries out the reaction tRNA(Tyr) + L-tyrosine + ATP = L-tyrosyl-tRNA(Tyr) + AMP + diphosphate + H(+). Catalyzes the attachment of tyrosine to tRNA(Tyr) in a two-step reaction: tyrosine is first activated by ATP to form Tyr-AMP and then transferred to the acceptor end of tRNA(Tyr). The chain is Tyrosine--tRNA ligase from Symbiobacterium thermophilum (strain DSM 24528 / JCM 14929 / IAM 14863 / T).